We begin with the raw amino-acid sequence, 146 residues long: Dihydroneopterin aldolase 1 (146 aa).

Residues Glu-41, Tyr-73, and 92–93 contribute to the substrate site; that span reads LE. Residue Lys-119 is the Proton donor/acceptor of the active site.

It belongs to the DHNA family. Homooctamer. Forms a hollow cylinder assembled from two ring-shaped tetramers. Expressed in roots, leaves, stems and siliques.

The enzyme catalyses 7,8-dihydroneopterin = 6-hydroxymethyl-7,8-dihydropterin + glycolaldehyde. Its pathway is cofactor biosynthesis; tetrahydrofolate biosynthesis; 2-amino-4-hydroxy-6-hydroxymethyl-7,8-dihydropteridine diphosphate from 7,8-dihydroneopterin triphosphate: step 3/4. Its function is as follows. Catalyzes the conversion of 7,8-dihydroneopterin into 6-hydroxymethyl-7,8-dihydropterin, a biosynthetic precursor of the vitamin tetrahydrofolate. Can use L-threo-dihydroneopterin and D-erythro-dihydroneopterin as substrates for the formation of 6-hydroxymethyldihydropterin, but it can also catalyze the epimerization of carbon 2' of dihydroneopterin and dihydromonapterin. This is Dihydroneopterin aldolase 1 from Arabidopsis thaliana (Mouse-ear cress).